The chain runs to 299 residues: Glycine--tRNA ligase alpha subunit (299 aa).

Belongs to the class-II aminoacyl-tRNA synthetase family. As to quaternary structure, tetramer of two alpha and two beta subunits.

The protein localises to the cytoplasm. The catalysed reaction is tRNA(Gly) + glycine + ATP = glycyl-tRNA(Gly) + AMP + diphosphate. The chain is Glycine--tRNA ligase alpha subunit from Pediococcus pentosaceus (strain ATCC 25745 / CCUG 21536 / LMG 10740 / 183-1w).